The primary structure comprises 289 residues: Phosphatidylserine decarboxylase proenzyme (289 aa).

Residues Asp89, His146, and Ser252 each act as charge relay system; for autoendoproteolytic cleavage activity in the active site. Catalysis depends on Ser252, which acts as the Schiff-base intermediate with substrate; via pyruvic acid; for decarboxylase activity. Ser252 carries the pyruvic acid (Ser); by autocatalysis modification.

This sequence belongs to the phosphatidylserine decarboxylase family. PSD-B subfamily. Prokaryotic type I sub-subfamily. As to quaternary structure, heterodimer of a large membrane-associated beta subunit and a small pyruvoyl-containing alpha subunit. It depends on pyruvate as a cofactor. Is synthesized initially as an inactive proenzyme. Formation of the active enzyme involves a self-maturation process in which the active site pyruvoyl group is generated from an internal serine residue via an autocatalytic post-translational modification. Two non-identical subunits are generated from the proenzyme in this reaction, and the pyruvate is formed at the N-terminus of the alpha chain, which is derived from the carboxyl end of the proenzyme. The autoendoproteolytic cleavage occurs by a canonical serine protease mechanism, in which the side chain hydroxyl group of the serine supplies its oxygen atom to form the C-terminus of the beta chain, while the remainder of the serine residue undergoes an oxidative deamination to produce ammonia and the pyruvoyl prosthetic group on the alpha chain. During this reaction, the Ser that is part of the protease active site of the proenzyme becomes the pyruvoyl prosthetic group, which constitutes an essential element of the active site of the mature decarboxylase.

Its subcellular location is the cell membrane. It carries out the reaction a 1,2-diacyl-sn-glycero-3-phospho-L-serine + H(+) = a 1,2-diacyl-sn-glycero-3-phosphoethanolamine + CO2. Its pathway is phospholipid metabolism; phosphatidylethanolamine biosynthesis; phosphatidylethanolamine from CDP-diacylglycerol: step 2/2. Catalyzes the formation of phosphatidylethanolamine (PtdEtn) from phosphatidylserine (PtdSer). In Shewanella putrefaciens (strain CN-32 / ATCC BAA-453), this protein is Phosphatidylserine decarboxylase proenzyme.